A 406-amino-acid chain; its full sequence is Type IV pilus assembly protein PilC (406 aa).

The next 4 membrane-spanning stretches (helical) occupy residues Ile69–Leu91, Tyr171–Val191, Phe211–Val231, and Met377–Phe397.

The protein belongs to the GSP F family. Homotetramer. Interacts with PilB.

The protein localises to the cell inner membrane. Essential inner membrane component of the type IV pilus (T4P) that plays a role in surface and host cell adhesion, colonization, biofilm maturation, virulence, and twitching, a form of surface-associated motility facilitated by cycles of extension, adhesion, and retraction of T4P fibers. Controls both pilus assembly and disassembly and plays an important role in PilB localization to the complex and ATPase activity. In Thermus thermophilus (strain ATCC 27634 / DSM 579 / HB8), this protein is Type IV pilus assembly protein PilC.